Consider the following 154-residue polypeptide: Pro-corazonin (154 aa).

An N-terminal signal peptide occupies residues 1–19 (MLRLLLLPLFLFTLSMCMG). Q20 bears the Pyrrolidone carboxylic acid mark. N30 carries the asparagine amide modification. Residues 70–154 (LERCLSQLQR…SAEPNVFGKH (85 aa)) constitute a propeptide that is removed on maturation.

This sequence belongs to the corazonin family. Expression is restricted to 24 neurons in the larval CNS (8 in the brain and 16 in the ventral nerve cord) and 12-16 neurons in the pars lateralis of the adult brain.

It localises to the secreted. Cardioactive peptide. Corazonin is probably involved in the physiological regulation of the heart beat. Clock (Clk) and cycle (cyc) proteins negatively regulate Crz transcription in a cell-specific manner. In Drosophila simulans (Fruit fly), this protein is Pro-corazonin (Crz).